A 488-amino-acid chain; its full sequence is Proline--tRNA ligase (488 aa).

The protein belongs to the class-II aminoacyl-tRNA synthetase family. ProS type 3 subfamily. As to quaternary structure, homodimer.

Its subcellular location is the cytoplasm. It catalyses the reaction tRNA(Pro) + L-proline + ATP = L-prolyl-tRNA(Pro) + AMP + diphosphate. Its function is as follows. Catalyzes the attachment of proline to tRNA(Pro) in a two-step reaction: proline is first activated by ATP to form Pro-AMP and then transferred to the acceptor end of tRNA(Pro). This is Proline--tRNA ligase from Pyrobaculum islandicum (strain DSM 4184 / JCM 9189 / GEO3).